The chain runs to 90 residues: Probable Fe(2+)-trafficking protein (90 aa).

This sequence belongs to the Fe(2+)-trafficking protein family.

Functionally, could be a mediator in iron transactions between iron acquisition and iron-requiring processes, such as synthesis and/or repair of Fe-S clusters in biosynthetic enzymes. This chain is Probable Fe(2+)-trafficking protein, found in Pseudomonas aeruginosa (strain UCBPP-PA14).